The primary structure comprises 147 residues: Hemoglobin subunit epsilon-Y2 (147 aa).

The Globin domain occupies 3–147 (NFTAEEKTLI…VATALSHKYH (145 aa)). At Ser51 the chain carries Phosphoserine. Positions 64 and 93 each coordinate heme b.

It belongs to the globin family. In terms of tissue distribution, high expression in yolk sac blood islands, fetal liver, and embryonic erythrocytes. Very low levels in adult liver and spleen.

Functionally, hemoglobin epsilon chain is a beta-type chain found in early embryos. This is Hemoglobin subunit epsilon-Y2 (Hbb-y) from Mus musculus (Mouse).